Reading from the N-terminus, the 1048-residue chain is Calcium-transporting ATPase, endoplasmic reticulum-type (1048 aa).

The Cytoplasmic segment spans residues M1 to D63. The helical transmembrane segment at T64–Q84 threads the bilayer. Residues D85–E93 are Lumenal-facing. Residues A94–W114 traverse the membrane as a helical segment. Over Q115 to M213 the chain is Cytoplasmic. The chain crosses the membrane as a helical span at residues V214–M234. Topologically, residues C235–R267 are lumenal. A helical membrane pass occupies residues L268–L288. The Cytoplasmic segment spans residues S289–K312. A helical transmembrane segment spans residues I313–C333. Ca(2+) is bound by residues V319, A320, I322, and E324. Residues L334–S800 lie on the Lumenal side of the membrane. The 4-aspartylphosphate intermediate role is filled by D366. Residues D728 and D732 each contribute to the Mg(2+) site. 2 residues coordinate Ca(2+): N794 and E797. A helical transmembrane segment spans residues I801–V821. Residues N822, T825, and D826 each contribute to the Ca(2+) site. Residues N822–R862 lie on the Cytoplasmic side of the membrane. The helical transmembrane segment at Y863–T883 threads the bilayer. Residues Q884 to K944 are Lumenal-facing. Residues A945 to L965 form a helical membrane-spanning segment. E957 is a Ca(2+) binding site. At S966 to W981 the chain is on the cytoplasmic side. The chain crosses the membrane as a helical span at residues L982 to L1002. At A1003–G1007 the chain is on the lumenal side. A helical membrane pass occupies residues I1008–L1028. Residues I1029–A1048 lie on the Cytoplasmic side of the membrane.

The protein belongs to the cation transport ATPase (P-type) (TC 3.A.3) family. Type IIA subfamily. In terms of tissue distribution, 9-fold higher level in roots compared with leaves.

The protein localises to the endoplasmic reticulum membrane. It catalyses the reaction Ca(2+)(in) + ATP + H2O = Ca(2+)(out) + ADP + phosphate + H(+). In terms of biological role, this magnesium-dependent enzyme catalyzes the hydrolysis of ATP coupled with the translocation of calcium from the cytosol to an endomembrane compartment. This chain is Calcium-transporting ATPase, endoplasmic reticulum-type, found in Solanum lycopersicum (Tomato).